Consider the following 370-residue polypeptide: Histidinol-phosphate aminotransferase (370 aa).

An N6-(pyridoxal phosphate)lysine modification is found at lysine 220.

Belongs to the class-II pyridoxal-phosphate-dependent aminotransferase family. Histidinol-phosphate aminotransferase subfamily. In terms of assembly, homodimer. Pyridoxal 5'-phosphate is required as a cofactor.

It catalyses the reaction L-histidinol phosphate + 2-oxoglutarate = 3-(imidazol-4-yl)-2-oxopropyl phosphate + L-glutamate. The protein operates within amino-acid biosynthesis; L-histidine biosynthesis; L-histidine from 5-phospho-alpha-D-ribose 1-diphosphate: step 7/9. This chain is Histidinol-phosphate aminotransferase, found in Granulibacter bethesdensis (strain ATCC BAA-1260 / CGDNIH1).